Here is a 413-residue protein sequence, read N- to C-terminus: MKPRVLGMILAGGQGSRLAPLTQKRSKPAVPFGSKYRIIDFAINNFINSGMFSVYVLTQYKAQSLTEHIQRGWRFGTFLSDYFITLVPAQMYRFEELGDAWYRGTADAVYQNMHLIDNFEADYVAIFSGDHIYKMNVEHMLEKHIETRADVTIAAYPMPQSQAHQFGVMQVDERWRVTEFHEKVPDPPTIPGQADLSLTSMGNYIFSRRALEELLEASISGQETGYDFGHNVIPRALSDGYHVQAYDFHKNPIPGQERPNTYWRDVGTLDAYFEANMDLVSVNPEFDIYNPEWPLRTSSEFSPPAKFVHESEGRKGQAFNSIMAGGAIISGGTVRDSVLGRNVRTHSYSLVESCVLFDDVQVGRHSHLRRVIVDKDVVIPPGTTIGLNREHDEQRGFTVTEHGVVVVPKGYVF.

Residues Tyr102, Gly167, 182 to 183, and Ser200 contribute to the alpha-D-glucose 1-phosphate site; that span reads EK.

The protein belongs to the bacterial/plant glucose-1-phosphate adenylyltransferase family. In terms of assembly, homotetramer.

The catalysed reaction is alpha-D-glucose 1-phosphate + ATP + H(+) = ADP-alpha-D-glucose + diphosphate. It functions in the pathway glycan biosynthesis; glycogen biosynthesis. In terms of biological role, involved in the biosynthesis of ADP-glucose, a building block required for the elongation reactions to produce glycogen. Catalyzes the reaction between ATP and alpha-D-glucose 1-phosphate (G1P) to produce pyrophosphate and ADP-Glc. This Deinococcus radiodurans (strain ATCC 13939 / DSM 20539 / JCM 16871 / CCUG 27074 / LMG 4051 / NBRC 15346 / NCIMB 9279 / VKM B-1422 / R1) protein is Glucose-1-phosphate adenylyltransferase.